A 193-amino-acid chain; its full sequence is MVEKSIVQEAKDIHLAMELITLGARLQMLESETQLSRGRLIKLYKELRGSPPPKGMLPFSTDWFMTWEQNIHSSMFYNAYSFLLKSGQCTGVEAVIKAYRLYLEQCPDQSGIPPLLALTRAWTLVRFVDSGMLQLSGCNCCGGTFITHAHQPRNSFVCSLCQPPSRAVKKRKLSPQSADITSQLLDEQVRRAV.

Cys-138, Cys-141, Cys-158, and Cys-161 together coordinate Zn(2+).

The protein belongs to the FlhC family. As to quaternary structure, heterohexamer composed of two FlhC and four FlhD subunits. Each FlhC binds a FlhD dimer, forming a heterotrimer, and a hexamer assembles by dimerization of two heterotrimers. Requires Zn(2+) as cofactor.

It is found in the cytoplasm. Its function is as follows. Functions in complex with FlhD as a master transcriptional regulator that regulates transcription of several flagellar and non-flagellar operons by binding to their promoter region. Activates expression of class 2 flagellar genes, including fliA, which is a flagellum-specific sigma factor that turns on the class 3 genes. Also regulates genes whose products function in a variety of physiological pathways. The sequence is that of Flagellar transcriptional regulator FlhC from Yersinia enterocolitica.